The sequence spans 902 residues: 4-hydroxyphenylacetate decarboxylase glycyl radical subunit (902 aa).

Positions 38-774 (KRAEDLLDVY…ATLATPDGRL (737 aa)) constitute a PFL domain. 4-hydroxyphenylacetate contacts are provided by serine 348 and cysteine 507. The active-site Cysteine radical intermediate is the cysteine 507. Glutamate 509 serves as the catalytic Proton donor. Histidine 540 and glutamate 641 together coordinate 4-hydroxyphenylacetate. Positions 782-902 (GSVSAYAGTD…VIARTEYEGV (121 aa)) constitute a Glycine radical domain. The residue at position 877 (glycine 877) is a Glycine radical.

It belongs to the glycyl radical enzyme (GRE) family. HPAD subfamily. As to quaternary structure, heterooctamer consisting of 4 large (HpdB) subunits and 4 small (HpdC) subunits, arranged as a tetramer of heterodimers. Also forms a catalytically inactive homodimer. In terms of processing, requires the activating protein CsdA to generate the key active site glycyl radical that is involved in catalysis. Post-translationally, phosphorylated on serine. Phosphorylation may trigger the formation of the active heterooctamers and thereby regulates enzyme activity.

The enzyme catalyses 4-hydroxyphenylacetate + H(+) = 4-methylphenol + CO2. It catalyses the reaction 3,4-dihydroxyphenylacetate + H(+) = 4-methylcatechol + CO2. Its function is as follows. Glycyl radical subunit of the HPA decarboxylase that decarboxylates phenylacetates with a hydroxyl group in the p-position. Active toward 4-hydroxyphenylacetate and 3,4-dihydroxyphenylacetate, forming 4-methylphenol and 4-methylcatechol, respectively. Is likely involved in the catabolism of aromatic amino acids such as tyrosine fermentation. 4-methylphenol (p-cresol) formation provides metabolic toxicity, which allows an active suppression of other microbes and may provide growth advantages for the producers in highly competitive environments. The large subunit is the catalytic subunit that binds the substrate. In Clostridioides difficile (strain 630) (Peptoclostridium difficile), this protein is 4-hydroxyphenylacetate decarboxylase glycyl radical subunit.